The sequence spans 152 residues: Ninjurin-1 (152 aa).

Position 1 is an N-acetylmethionine (methionine 1). Over residues 1 to 10 (MDPGTEEYEL) the composition is skewed to acidic residues. The interval 1–30 (MDPGTEEYELNGDLRPGSPGSPDASPPRWG) is disordered. Residues 1–78 (MDPGTEEYEL…EQGNEFAFFV (78 aa)) lie on the Extracellular side of the membrane. A compositionally biased stretch (low complexity) spans 16–27 (PGSPGSPDASPP). 3 positions are modified to phosphoserine: serine 18, serine 21, and serine 25. The segment at 26–37 (PPRWGLRNRPIN) is N-terminal adhesion motif. Residues 40–69 (HYANKKSAAESMLDIALLMANASQLKAVVE) form a required to induce plasma membrane rupture region. Residues 44–55 (KKSAAESMLDIA) form a helix alpha1 region. A helix alpha2 region spans residues 58–74 (MANASQLKAVVEQGNEF). Asparagine 60 carries an N-linked (GlcNAc...) asparagine glycan. The helical transmembrane segment at 79–103 (PLVVLISISLVLQIGVGVLLIFLVK) threads the bilayer. The Cytoplasmic portion of the chain corresponds to 104–113 (YDLNNPAKHA). The helical transmembrane segment at 114-138 (KLDFLNNLATGLVFIIVVVNIFITA) threads the bilayer. Residues 139–152 (FGVQKPVMDVAPRQ) are Extracellular-facing.

It belongs to the ninjurin family. Homodimer; in absence of death stimuli, forms an inactive homodimer. Homooligomer; in response to death stimuli, homooligomerizes into long, highly branched filaments and large, ring-shaped structures in the membrane. The topology shown in the entry corresponds to the activated form. Post-translationally, cleaved by MMP9 protease to generate the Secreted ninjurin-1 form. In terms of processing, N-linked glycosylation is required for homooligomerization.

It localises to the cell membrane. It is found in the synaptic cell membrane. Its subcellular location is the secreted. Its activity is regulated as follows. In response to death stimuli, homooligomerizes and disrupts membrane integrity by introducing the hydrophilic faces of alpha1 and alpha2 helices into the hydrophobic membrane. Homooligomerization and ability to mediate plasma membrane rupture is inhibited by glycine; it is unclear whether glycine directly or indirectly inhibits homooligomerization. In normal conditions, NINJ1 is autoinhibited via formation of a homodimer: in the inactive homodimer, the alpha1 and alpha2 helices (residues 44-74) form a single transmembrane region without a kink, in which hydrophilic faces of alpha1 and alpha2 helices are sequestered. Its function is as follows. Effector of various programmed cell death, such as pyroptosis and necroptosis, which mediates plasma membrane rupture (cytolysis). Oligomerizes in response to death stimuli and forms ring-like structures on the plasma membrane: acts by cutting and shedding membrane disks, like a cookie cutter, leading to membrane damage and loss that cannot be repaired by the cell. Plasma membrane rupture leads to release intracellular molecules named damage-associated molecular patterns (DAMPs) that propagate the inflammatory response. Mechanistically, mediates plasma membrane rupture by introducing hydrophilic faces of 2 alpha helices into the hydrophobic membrane. Induces plasma membrane rupture downstream of Gasdermin (GSDMA, GSDMB, GSDMC, GSDMD, or GSDME) or MLKL during pyroptosis or necroptosis, respectively. Acts as an effector of PANoptosis downstream of CASP1, CASP4, CASP8 and RIPK3. Also induces plasma membrane rupture in response to cell swelling caused by osmotic stress and ferroptosis downstream of lipid peroxidation. Acts as a regulator of Toll-like receptor 4 (TLR4) signaling triggered by lipopolysaccharide (LPS) during systemic inflammation; directly binds LPS. Involved in leukocyte migration during inflammation by promoting transendothelial migration of macrophages via homotypic binding. Promotes the migration of monocytes across the brain endothelium to central nervous system inflammatory lesions. Also acts as a homophilic transmembrane adhesion molecule involved in various processes such as axonal growth, cell chemotaxis and angiogenesis. Promotes cell adhesion by mediating homophilic interactions via its extracellular N-terminal adhesion motif (N-NAM). Involved in the progression of the inflammatory stress by promoting cell-to-cell interactions between immune cells and endothelial cells. Plays a role in nerve regeneration by promoting maturation of Schwann cells. Acts as a regulator of angiogenesis. Promotes the formation of new vessels by mediating the interaction between capillary pericyte cells and endothelial cells. Promotes osteoclasts development by enhancing the survival of prefusion osteoclasts. Also involved in striated muscle growth and differentiation. Secreted form generated by cleavage, which has chemotactic activity. Acts as an anti-inflammatory mediator by promoting monocyte recruitment, thereby ameliorating atherosclerosis. The protein is Ninjurin-1 of Rattus norvegicus (Rat).